Here is a 299-residue protein sequence, read N- to C-terminus: Probable lipid kinase YegS (299 aa).

One can recognise a DAGKc domain in the interval Ala-2–Thr-133. ATP contacts are provided by residues Thr-40, Gly-66–Glu-72, and Thr-95. Mg(2+)-binding residues include Leu-215, Asp-218, and Leu-220. Glu-271 serves as the catalytic Proton acceptor.

The protein belongs to the diacylglycerol/lipid kinase family. YegS lipid kinase subfamily. Requires Mg(2+) as cofactor. Ca(2+) serves as cofactor.

Its subcellular location is the cytoplasm. Its function is as follows. Probably phosphorylates lipids; the in vivo substrate is unknown. This is Probable lipid kinase YegS from Shigella boydii serotype 18 (strain CDC 3083-94 / BS512).